Here is a 516-residue protein sequence, read N- to C-terminus: Cytochrome P450 monooxygenase ntnM (516 aa).

The helical transmembrane segment at 22–42 (IINVILSIAAIALIRALAISI) threads the bilayer. Residue cysteine 453 participates in heme binding.

The protein belongs to the cytochrome P450 family. Heme serves as cofactor.

It is found in the membrane. It participates in secondary metabolite biosynthesis; terpenoid biosynthesis. Cytochrome P450 monooxygenase; part of the gene cluster that mediates the biosynthesis of the meroterpenoids nectripenoids A and B, as well as cochliquninone D and isocochliquninone E. The pathway probably begins with the HR-PKS ntnH that catalyzes two chain-extension steps to form a reduced triketide, which then primes the SAT domain in the NR-PKS ntnG to initiate three more cycles of extension to give a linear hexaketide corresponding to the polyketide part of nectripenoids. The FAD-dependent monooxygenase ntnJ then performs an oxidative decarboxylation at C11 of the ntnH/ntnG product, via an electrophilic aromatic hydroxylation with concomitant ipso-decarboxylation. The membrane-bound polyprenyl transferase ntnF then introduces a farnesyl group before the FAD-dependent monooxygenase ntnK functions as the first epoxidase on terminal C12'-C13' olefin, followed by a second epoxidation on C7'-C8' catalyzed by ntnA. The terpene cyclase/mutase ntnI then initiates the sequential tricyclic ring formation through protonation of the terminal epoxide and catalyzes the regioselective and stereoselective 6/6/6-tricyclic ring formation. The cytochrome P450 monooxygenase ntnM may then hydroxylate C1'. The chain is Cytochrome P450 monooxygenase ntnM from Nectria sp.